We begin with the raw amino-acid sequence, 357 residues long: UDP-N-acetylglucosamine--N-acetylmuramyl-(pentapeptide) pyrophosphoryl-undecaprenol N-acetylglucosamine transferase (357 aa).

UDP-N-acetyl-alpha-D-glucosamine-binding positions include threonine 13–glycine 15, asparagine 125, arginine 161, serine 189, isoleucine 243, and glutamine 288.

The protein belongs to the glycosyltransferase 28 family. MurG subfamily.

It is found in the cell inner membrane. It carries out the reaction di-trans,octa-cis-undecaprenyl diphospho-N-acetyl-alpha-D-muramoyl-L-alanyl-D-glutamyl-meso-2,6-diaminopimeloyl-D-alanyl-D-alanine + UDP-N-acetyl-alpha-D-glucosamine = di-trans,octa-cis-undecaprenyl diphospho-[N-acetyl-alpha-D-glucosaminyl-(1-&gt;4)]-N-acetyl-alpha-D-muramoyl-L-alanyl-D-glutamyl-meso-2,6-diaminopimeloyl-D-alanyl-D-alanine + UDP + H(+). Its pathway is cell wall biogenesis; peptidoglycan biosynthesis. Functionally, cell wall formation. Catalyzes the transfer of a GlcNAc subunit on undecaprenyl-pyrophosphoryl-MurNAc-pentapeptide (lipid intermediate I) to form undecaprenyl-pyrophosphoryl-MurNAc-(pentapeptide)GlcNAc (lipid intermediate II). The protein is UDP-N-acetylglucosamine--N-acetylmuramyl-(pentapeptide) pyrophosphoryl-undecaprenol N-acetylglucosamine transferase of Bordetella petrii (strain ATCC BAA-461 / DSM 12804 / CCUG 43448).